We begin with the raw amino-acid sequence, 1196 residues long: ATP-dependent helicase/deoxyribonuclease subunit B (1196 aa).

Residues Cys-823, Cys-1149, Cys-1152, and Cys-1158 each coordinate [4Fe-4S] cluster.

The protein belongs to the helicase family. AddB/RexB type 2 subfamily. Heterodimer of AddA and RexB. The cofactor is Mg(2+). [4Fe-4S] cluster serves as cofactor.

In terms of biological role, the heterodimer acts as both an ATP-dependent DNA helicase and an ATP-dependent, dual-direction single-stranded exonuclease. Recognizes the chi site generating a DNA molecule suitable for the initiation of homologous recombination. This subunit has 5' -&gt; 3' nuclease activity but not helicase activity. This is ATP-dependent helicase/deoxyribonuclease subunit B from Enterococcus faecalis (strain ATCC 700802 / V583).